A 112-amino-acid chain; its full sequence is Nitrogen regulatory protein P-II (112 aa).

Tyr51 carries the post-translational modification O-UMP-tyrosine.

This sequence belongs to the P(II) protein family. In terms of assembly, homotrimer.

In terms of biological role, in nitrogen-limiting conditions, when the ratio of Gln to 2-ketoglutarate decreases, P-II is uridylylated to P-II-UMP. P-II-UMP allows the deadenylation of glutamine synthetase (GS), thus activating the enzyme. Conversely, in nitrogen excess P-II is deuridylated and promotes the adenylation of GS. P-II indirectly controls the transcription of the GS gene (glnA). P-II prevents NR-II-catalyzed conversion of NR-I to NR-I-phosphate, the transcriptional activator of glnA. When P-II is uridylylated to P-II-UMP, these events are reversed. The polypeptide is Nitrogen regulatory protein P-II (glnB) (Bradyrhizobium diazoefficiens (strain JCM 10833 / BCRC 13528 / IAM 13628 / NBRC 14792 / USDA 110)).